The chain runs to 652 residues: tRNA 5-methylaminomethyl-2-thiouridine biosynthesis bifunctional protein MnmC (652 aa).

The tract at residues 1–227 (MLSWKNDLTP…KREMLTGKYS (227 aa)) is tRNA (mnm(5)s(2)U34)-methyltransferase. Positions 259–652 (IGAGIAGSTL…ARFLYRRIRK (394 aa)) are FAD-dependent cmnm(5)s(2)U34 oxidoreductase.

It in the N-terminal section; belongs to the methyltransferase superfamily. tRNA (mnm(5)s(2)U34)-methyltransferase family. In the C-terminal section; belongs to the DAO family. The cofactor is FAD.

The protein resides in the cytoplasm. The enzyme catalyses 5-aminomethyl-2-thiouridine(34) in tRNA + S-adenosyl-L-methionine = 5-methylaminomethyl-2-thiouridine(34) in tRNA + S-adenosyl-L-homocysteine + H(+). Its function is as follows. Catalyzes the last two steps in the biosynthesis of 5-methylaminomethyl-2-thiouridine (mnm(5)s(2)U) at the wobble position (U34) in tRNA. Catalyzes the FAD-dependent demodification of cmnm(5)s(2)U34 to nm(5)s(2)U34, followed by the transfer of a methyl group from S-adenosyl-L-methionine to nm(5)s(2)U34, to form mnm(5)s(2)U34. This is tRNA 5-methylaminomethyl-2-thiouridine biosynthesis bifunctional protein MnmC from Leptospira borgpetersenii serovar Hardjo-bovis (strain JB197).